A 294-amino-acid polypeptide reads, in one-letter code: Acetylglutamate kinase (294 aa).

Residues 66–67 (GG), Arg-88, and Asn-193 contribute to the substrate site.

It belongs to the acetylglutamate kinase family. ArgB subfamily.

It localises to the cytoplasm. The enzyme catalyses N-acetyl-L-glutamate + ATP = N-acetyl-L-glutamyl 5-phosphate + ADP. It participates in amino-acid biosynthesis; L-arginine biosynthesis; N(2)-acetyl-L-ornithine from L-glutamate: step 2/4. Functionally, catalyzes the ATP-dependent phosphorylation of N-acetyl-L-glutamate. This is Acetylglutamate kinase from Agrobacterium fabrum (strain C58 / ATCC 33970) (Agrobacterium tumefaciens (strain C58)).